We begin with the raw amino-acid sequence, 105 residues long: Endogenous retrovirus group K member 104 Rec protein (105 aa).

The disordered stretch occupies residues 1 to 43 (MNPSEMQRKAPPRRRRHCNRAPLTHKMNKMVTSEEEMKLPSTK). Positions 10–19 (APPRRRRHCN) are enriched in basic residues. The Nuclear localization signal signature appears at 13-20 (RRRRHCNR). Positions 50 to 59 (WAQLKKLTQL) match the Nuclear export signal motif.

Forms homodimers, homotrimers, and homotetramers via a C-terminal domain. Associates with XPO1 and with ZNF145.

The protein resides in the cytoplasm. The protein localises to the nucleus. It localises to the nucleolus. Functionally, retroviral replication requires the nuclear export and translation of unspliced, singly-spliced and multiply-spliced derivatives of the initial genomic transcript. Rec interacts with a highly structured RNA element (RcRE) present in the viral 3'LTR and recruits the cellular nuclear export machinery. This permits export to the cytoplasm of unspliced genomic or incompletely spliced subgenomic viral transcripts. This is Endogenous retrovirus group K member 104 Rec protein (HERV-K104) from Homo sapiens (Human).